A 123-amino-acid chain; its full sequence is Small ribosomal subunit protein uS13 (123 aa).

Residues H92 to K123 are disordered.

Belongs to the universal ribosomal protein uS13 family. Part of the 30S ribosomal subunit. Forms a loose heterodimer with protein S19. Forms two bridges to the 50S subunit in the 70S ribosome.

Located at the top of the head of the 30S subunit, it contacts several helices of the 16S rRNA. In the 70S ribosome it contacts the 23S rRNA (bridge B1a) and protein L5 of the 50S subunit (bridge B1b), connecting the 2 subunits; these bridges are implicated in subunit movement. Contacts the tRNAs in the A and P-sites. The sequence is that of Small ribosomal subunit protein uS13 from Clostridium tetani (strain Massachusetts / E88).